The following is a 152-amino-acid chain: Aspartate carbamoyltransferase regulatory chain (152 aa).

Residues Cys109, Cys114, Cys138, and Cys141 each contribute to the Zn(2+) site.

The protein belongs to the PyrI family. Contains catalytic and regulatory chains. Requires Zn(2+) as cofactor.

Involved in allosteric regulation of aspartate carbamoyltransferase. The chain is Aspartate carbamoyltransferase regulatory chain from Proteus mirabilis (strain HI4320).